A 112-amino-acid chain; its full sequence is DNA-binding protein TGAM_1196 (112 aa).

The protein belongs to the PDCD5 family.

The polypeptide is DNA-binding protein TGAM_1196 (Thermococcus gammatolerans (strain DSM 15229 / JCM 11827 / EJ3)).